A 171-amino-acid chain; its full sequence is UPF0398 protein stu0232 (171 aa).

This sequence belongs to the UPF0398 family.

This is UPF0398 protein stu0232 from Streptococcus thermophilus (strain ATCC BAA-250 / LMG 18311).